The sequence spans 1274 residues: MNPTELHMMWMSSQYNAANNMTLEDATALLNHPTVGLLEEMSGHHHQPTLEMNPMMGLVGGDFNGHAATLSGTLPPGTLIATNSNNLYSFAHLGGLQHQLLQQSAAVAAFQNYTEVMDADGMTVGLATDPHGELMDETCDDEDQVYGHQIDDGYDDGGAGLEPKQEIINIDDFVMMNEDNNSYDGTDFMTSSDKDISQSSSSGLTHMQGGGVSLGVAGAEHDLLVPLGDGLMHHKLLGATLAPAMPLNVGNSNVFGNIMVTGADPPSSKQMKGYRNSNSSGTSSATVTTVASTAVMRAQRKTRKIEPVNRPGLVLKTPIAYKGNIDPSVIPIQKDGMAVCERCGAIGVKHTFYTKSRRFCSMACARGELYSLVLNNKMETTGATTSNNQSTSSSPLPAASGTSLDVTEDALLASDQPQSDIELDLHAAHIKNANYRFRITDQSKITQLNSFGEPMSLGGDAAAHNVQMAADETIAALNGAAVGDAAAPGGEANGSGNDTSTPNTASSGYLSAAPTPKALRLFKDVYPQDDLPQIPKYERLPAPCPQMEKVLSIRRRMYDPTHSYDWLPRLNKENFNAAPVTCFPHAPGCEVWDNLGVGMKVEVENTDCDNIEIIQPGQTPTSFWVATILEIKGYKALMSYEGFDTDSHDFWVNLCNAEVHSVGWCATRGKPLIPPRTIEHKYKDWKDFLVGRLSGARTLPSNFYNKINDSLQSRFRLGLNLECVDKDRISQVRLATVTKIVGKRLFLRYFDTDDGFWCHEDSPIIHPVGWATTVGHNLAAPQDYLERMLAGREAMIEVHEDDATIELFKMNFTFDEYFLDGKTNGFIEGMKLEAVDPLNLSSICPATVMAVLKFGYMMIRIDSYQPDESGSDWFCYHEKSPCIFPAGFCSANNISVTPPNGYDSRTFTWEVYLRNTGAVAANQHLFHRVVPEHGFETGMSLECADLMDPRLVCVATVARVVGRLLKVHFDGWTDEYDQWLDCESADIYPVGWCILVGHKLEGPPRVSYQQVAKPAPKPKVPRKKKTKKGASTTGGGAAKQQNDNTQTTQTVKPRTIALKTTPHLPKLSIKLELKPEHHNAAFYENNQPEDGDGDEEDPDPDADADLDADADGDGDGSTSHISEQSTTHSSSDQILGSGSGGGSTSAPVVTAATGSIGGNSNKMNSSATSSKYIPRLADIDASEAAHLELQPDSWNVYDVSQFLRVNDCTAYCDTFSRSKIDGKRLLQLTKDDIMPLLGMKVGPALIISDLITQLKCKVNPGRARSHKTNKSSYL.

Positions 266–285 (PSSKQMKGYRNSNSSGTSSA) are disordered. Positions 267-278 (SSKQMKGYRNSN) are enriched in polar residues. The FCS-type zinc-finger motif lies at 331–366 (PIQKDGMAVCERCGAIGVKHTFYTKSRRFCSMACAR). Cysteine 340, cysteine 343, cysteine 360, and cysteine 364 together coordinate Zn(2+). Residues 381–394 (TGATTSNNQSTSSS) show a composition bias toward low complexity. Disordered regions lie at residues 381 to 401 (TGAT…AASG) and 488 to 510 (PGGE…SGYL). The span at 494–509 (GSGNDTSTPNTASSGY) shows a compositional bias: polar residues. 4 MBT repeats span residues 564–675 (YDWL…LIPP), 683–781 (KDWK…LAAP), 789–899 (LAGR…VTPP), and 907–1003 (FTWE…LEGP). 2 disordered regions span residues 1007-1063 (SYQQ…TTPH) and 1083-1167 (YENN…NSSA). Residues 1019–1028 (KVPRKKKTKK) are compositionally biased toward basic residues. Residues 1038–1050 (AKQQNDNTQTTQT) are compositionally biased toward low complexity. Residues 1087–1114 (QPEDGDGDEEDPDPDADADLDADADGDG) show a composition bias toward acidic residues. 2 stretches are compositionally biased toward polar residues: residues 1117-1128 (STSHISEQSTTH) and 1158-1167 (GNSNKMNSSA). One can recognise an SAM domain in the interval 1194 to 1258 (WNVYDVSQFL…DLITQLKCKV (65 aa)).

In terms of assembly, interacts with pho as a component of the pho-repressive complex (PhoRC).

It localises to the nucleus. Its function is as follows. Polycomb group (PcG) protein that binds to the Polycomb response elements (PREs) found in the regulatory regions of many genes. PcG proteins act by forming multiprotein complexes, which are required to maintain the transcriptionally repressive state of homeotic genes throughout development. PcG proteins are not required to initiate repression, but to maintain it during later stages of development. They probably act via the methylation of histones, rendering chromatin heritably changed in its expressibility. Necessary but not sufficient to recruit a functional PcG repressive complex that represses target genes, suggesting that the recruitment of the distinct PRC1 complex is also required to allow a subsequent repression. The chain is Polycomb protein Sfmbt from Drosophila pseudoobscura pseudoobscura (Fruit fly).